Reading from the N-terminus, the 313-residue chain is tRNA dimethylallyltransferase (313 aa).

14–21 contributes to the ATP binding site; it reads GPTASGKT. 16-21 provides a ligand contact to substrate; it reads TASGKT. 2 interaction with substrate tRNA regions span residues 39–42 and 163–167; these read DSAL and QRIGR.

This sequence belongs to the IPP transferase family. As to quaternary structure, monomer. Mg(2+) serves as cofactor.

It catalyses the reaction adenosine(37) in tRNA + dimethylallyl diphosphate = N(6)-dimethylallyladenosine(37) in tRNA + diphosphate. In terms of biological role, catalyzes the transfer of a dimethylallyl group onto the adenine at position 37 in tRNAs that read codons beginning with uridine, leading to the formation of N6-(dimethylallyl)adenosine (i(6)A). The sequence is that of tRNA dimethylallyltransferase from Thiobacillus denitrificans (strain ATCC 25259 / T1).